The chain runs to 300 residues: Hairy/enhancer-of-split related with YRPW motif protein 1 (300 aa).

The interval 1-52 is disordered; sequence MKRGHDYSSSDSELDENIEVEKESADENGNLSSAAGSMSPSTSSQILARKRR. Positions 32-44 are enriched in low complexity; the sequence is SSAAGSMSPSTSS. Residues 48–103 form the bHLH domain; the sequence is ARKRRRGIIEKRRRDRINNSLSELRRLVPSAFEKQGSAKLEKAEILQMTVDHLKML. The region spanning 121-157 is the Orange domain; sequence YRSLGFRECLAEVARYLSIIEGMDTTDPLRVRLVSHL. Residues 199-210 show a composition bias toward low complexity; that stretch reads AHTSANSTSSST. 2 disordered regions span residues 199-232 and 278-300; these read AHTS…LRVP and LSPT…IGAF. Residues 290 to 293 carry the YRPW motif motif; that stretch reads YRPW.

It belongs to the HEY family. In terms of assembly, efficient DNA binding requires dimerization with another bHLH protein. Binds DNA in the form of homodimer or more strongly as a heterodimer with hes1/hairy1 or hes4/hairy2b. Also weakly interacts with the bHLH proteins hes2, neurod1 and neurod4/ath3. Interacts (via Orange domain) with ccdc89/boip (via C-terminus).

It localises to the nucleus. Its function is as follows. Downstream effector of Notch signaling. Transcriptional repressor which binds preferentially to the canonical E box sequence 5'-CACGTG-3'. Acts as a suppressor of neurogenesis by antagonizing proneural gene function. Functions during floorplate development. Plays a role in pronephros formation in the inhibition of distal tubule and duct cell fates and the promotion of glomus and proximal tubule formation. The chain is Hairy/enhancer-of-split related with YRPW motif protein 1 (hey1) from Xenopus tropicalis (Western clawed frog).